A 194-amino-acid polypeptide reads, in one-letter code: Putative manganese efflux pump MntP (194 aa).

6 helical membrane-spanning segments follow: residues 3 to 23, 37 to 57, 69 to 89, 110 to 132, 147 to 167, and 172 to 192; these read PFSI…AAIG, LRAG…GWLL, DHWI…VAGL, LGLA…SLAF, CTFS…NLIG, and MLGG…HLSG.

It belongs to the MntP (TC 9.B.29) family.

Its subcellular location is the cell inner membrane. Its function is as follows. Probably functions as a manganese efflux pump. This chain is Putative manganese efflux pump MntP, found in Xanthomonas euvesicatoria pv. vesicatoria (strain 85-10) (Xanthomonas campestris pv. vesicatoria).